A 454-amino-acid polypeptide reads, in one-letter code: UDP-N-acetylmuramate--L-alanine ligase (454 aa).

Residue 109-115 (GTHGKTT) participates in ATP binding.

This sequence belongs to the MurCDEF family.

Its subcellular location is the cytoplasm. The enzyme catalyses UDP-N-acetyl-alpha-D-muramate + L-alanine + ATP = UDP-N-acetyl-alpha-D-muramoyl-L-alanine + ADP + phosphate + H(+). Its pathway is cell wall biogenesis; peptidoglycan biosynthesis. Cell wall formation. This Protochlamydia amoebophila (strain UWE25) protein is UDP-N-acetylmuramate--L-alanine ligase.